Reading from the N-terminus, the 374-residue chain is Speckle-type POZ protein A (374 aa).

The MATH domain maps to 31–161; that stretch reads KFSYMWTINN…DDKLTLFCEV (131 aa). Residues 71–191 are required for nuclear localization; it reads VNPKGLDEES…PECRLADELG (121 aa). One can recognise a BTB domain in the interval 173 to 297; that stretch reads QNTMNMVKVP…MCEEALCSNL (125 aa). The interval 297-355 is homodimerization; that stretch reads LSVENAAEILILADLHSADQLKTQAVDFINYHASDVMETSGWKSMVVSHPHLVAEAYRS.

Belongs to the Tdpoz family. Homodimer. Part of cullin-RING-based BCR (BTB-CUL3-RBX1) E3 ubiquitin-protein ligase complexes that contain CUL3 and SPOP, plus a target protein.

The protein localises to the nucleus. It localises to the nucleus speckle. The protein operates within protein modification; protein ubiquitination. In terms of biological role, component of a cullin-RING-based BCR (BTB-CUL3-RBX1) E3 ubiquitin-protein ligase complex that mediates the ubiquitination of target proteins, leading most often to their proteasomal degradation. In Xenopus laevis (African clawed frog), this protein is Speckle-type POZ protein A (spop-a).